Here is a 715-residue protein sequence, read N- to C-terminus: DNA ligase (715 aa).

NAD(+)-binding positions include 47 to 51, 96 to 97, and E128; these read DADYD and SL. The active-site N6-AMP-lysine intermediate is the K130. NAD(+)-binding residues include R151, E188, K306, and K330. Zn(2+) contacts are provided by C435, C438, C453, and C459. Residues 637–715 enclose the BRCT domain; sequence RRDTAVAGKT…EDEWLALIGN (79 aa).

Belongs to the NAD-dependent DNA ligase family. LigA subfamily. It depends on Mg(2+) as a cofactor. Mn(2+) is required as a cofactor.

The catalysed reaction is NAD(+) + (deoxyribonucleotide)n-3'-hydroxyl + 5'-phospho-(deoxyribonucleotide)m = (deoxyribonucleotide)n+m + AMP + beta-nicotinamide D-nucleotide.. Functionally, DNA ligase that catalyzes the formation of phosphodiester linkages between 5'-phosphoryl and 3'-hydroxyl groups in double-stranded DNA using NAD as a coenzyme and as the energy source for the reaction. It is essential for DNA replication and repair of damaged DNA. In Rhodopseudomonas palustris (strain TIE-1), this protein is DNA ligase.